Consider the following 267-residue polypeptide: NAD kinase (267 aa).

Asp-45 (proton acceptor) is an active-site residue. Residues 45 to 46 (DG), 122 to 123 (NE), Arg-148, Asp-150, 161 to 166 (TAYNKS), Ala-185, and Gln-223 each bind NAD(+).

It belongs to the NAD kinase family. It depends on a divalent metal cation as a cofactor.

It is found in the cytoplasm. It catalyses the reaction NAD(+) + ATP = ADP + NADP(+) + H(+). In terms of biological role, involved in the regulation of the intracellular balance of NAD and NADP, and is a key enzyme in the biosynthesis of NADP. Catalyzes specifically the phosphorylation on 2'-hydroxyl of the adenosine moiety of NAD to yield NADP. The polypeptide is NAD kinase (Levilactobacillus brevis (strain ATCC 367 / BCRC 12310 / CIP 105137 / JCM 1170 / LMG 11437 / NCIMB 947 / NCTC 947) (Lactobacillus brevis)).